Here is a 312-residue protein sequence, read N- to C-terminus: Ribonuclease Z (312 aa).

Zn(2+) contacts are provided by histidine 63, histidine 65, aspartate 67, histidine 68, histidine 140, aspartate 211, and histidine 269. Residue aspartate 67 is the Proton acceptor of the active site.

It belongs to the RNase Z family. In terms of assembly, homodimer. It depends on Zn(2+) as a cofactor.

The catalysed reaction is Endonucleolytic cleavage of RNA, removing extra 3' nucleotides from tRNA precursor, generating 3' termini of tRNAs. A 3'-hydroxy group is left at the tRNA terminus and a 5'-phosphoryl group is left at the trailer molecule.. Functionally, zinc phosphodiesterase, which displays some tRNA 3'-processing endonuclease activity. Probably involved in tRNA maturation, by removing a 3'-trailer from precursor tRNA. The chain is Ribonuclease Z from Anoxybacillus flavithermus (strain DSM 21510 / WK1).